Reading from the N-terminus, the 157-residue chain is N5-carboxyaminoimidazole ribonucleotide mutase (157 aa).

Positions 8, 11, and 38 each coordinate substrate.

The protein belongs to the AIR carboxylase family. Class I subfamily.

The catalysed reaction is 5-carboxyamino-1-(5-phospho-D-ribosyl)imidazole + H(+) = 5-amino-1-(5-phospho-D-ribosyl)imidazole-4-carboxylate. The protein operates within purine metabolism; IMP biosynthesis via de novo pathway; 5-amino-1-(5-phospho-D-ribosyl)imidazole-4-carboxylate from 5-amino-1-(5-phospho-D-ribosyl)imidazole (N5-CAIR route): step 2/2. Its function is as follows. Catalyzes the conversion of N5-carboxyaminoimidazole ribonucleotide (N5-CAIR) to 4-carboxy-5-aminoimidazole ribonucleotide (CAIR). In Methanocaldococcus jannaschii (strain ATCC 43067 / DSM 2661 / JAL-1 / JCM 10045 / NBRC 100440) (Methanococcus jannaschii), this protein is N5-carboxyaminoimidazole ribonucleotide mutase.